The following is a 218-amino-acid chain: Eukaryotic translation initiation factor 4E-1 (218 aa).

Positions 1-11 are enriched in basic and acidic residues; the sequence is MQTEQPPKESQ. Disordered regions lie at residues 1–20 and 198–218; these read MQTE…SEPQ and FSAH…RMSV. Residues 206 to 218 are compositionally biased toward polar residues; sequence KSGSTRAKTRMSV.

It belongs to the eukaryotic initiation factor 4E family. EIF4F is a multi-subunit complex, the composition of which varies with external and internal environmental conditions. It is composed of at least eIF4A, eIF4E and eIF4G. eIF4E is also known to interact with other partners.

Its function is as follows. Recognizes and binds the 7-methylguanosine-containing mRNA cap during an early step in the initiation of protein synthesis and facilitates ribosome binding by inducing the unwinding of the mRNAs secondary structures. This Schizosaccharomyces pombe (strain 972 / ATCC 24843) (Fission yeast) protein is Eukaryotic translation initiation factor 4E-1 (tif451).